A 185-amino-acid chain; its full sequence is UPF0149 protein XF_2010 (185 aa).

The protein belongs to the UPF0149 family.

This is UPF0149 protein XF_2010 from Xylella fastidiosa (strain 9a5c).